A 371-amino-acid polypeptide reads, in one-letter code: Beta-1,3-galactosyltransferase 4 (371 aa).

Topologically, residues 1-4 are cytoplasmic; sequence MPLS. Residues 5 to 25 form a helical; Signal-anchor for type II membrane protein membrane-spanning segment; sequence LFRRVLLAVLLLVIIWTLFGP. The Lumenal portion of the chain corresponds to 26–371; it reads SGLGEELLSL…RCRFIAWFSS (346 aa). Residue N143 is glycosylated (N-linked (GlcNAc...) asparagine).

It belongs to the glycosyltransferase 31 family. In terms of tissue distribution, expressed in heart, brain, spleen, kidney, lung and testis.

It localises to the golgi apparatus membrane. The catalysed reaction is a ganglioside GM2 (d18:1(4E)) + UDP-alpha-D-galactose = a ganglioside GM1 (d18:1(4E)) + UDP + H(+). It carries out the reaction a ganglioside GM2 + UDP-alpha-D-galactose = a ganglioside GM1 + UDP + H(+). It catalyses the reaction a ganglioside GD2 (d18:1(4E)) + UDP-alpha-D-galactose = a ganglioside GD1b (d18:1(4E)) + UDP + H(+). The enzyme catalyses a ganglioside GA2 (d18:1(4E)) + UDP-alpha-D-galactose = a ganglioside GA1 (d18:1(4E)) + UDP + H(+). It participates in protein modification; protein glycosylation. In terms of biological role, involved in GM1/GD1B/GA1 ganglioside biosynthesis. The chain is Beta-1,3-galactosyltransferase 4 from Mus musculus (Mouse).